Reading from the N-terminus, the 338-residue chain is Ketol-acid reductoisomerase (NADP(+)) (338 aa).

The region spanning 1 to 181 (MKVFYDKDAD…GGGRAGIIET (181 aa)) is the KARI N-terminal Rossmann domain. Residues 24-27 (YGSQ), R47, and S52 each bind NADP(+). H107 is an active-site residue. Residue G133 participates in NADP(+) binding. The 146-residue stretch at 182 to 327 (NFREETETDL…AKLRAMMPWI (146 aa)) folds into the KARI C-terminal knotted domain. Mg(2+)-binding residues include D190, E194, E226, and E230. A substrate-binding site is contributed by S251.

The protein belongs to the ketol-acid reductoisomerase family. It depends on Mg(2+) as a cofactor.

The enzyme catalyses (2R)-2,3-dihydroxy-3-methylbutanoate + NADP(+) = (2S)-2-acetolactate + NADPH + H(+). The catalysed reaction is (2R,3R)-2,3-dihydroxy-3-methylpentanoate + NADP(+) = (S)-2-ethyl-2-hydroxy-3-oxobutanoate + NADPH + H(+). Its pathway is amino-acid biosynthesis; L-isoleucine biosynthesis; L-isoleucine from 2-oxobutanoate: step 2/4. It participates in amino-acid biosynthesis; L-valine biosynthesis; L-valine from pyruvate: step 2/4. In terms of biological role, involved in the biosynthesis of branched-chain amino acids (BCAA). Catalyzes an alkyl-migration followed by a ketol-acid reduction of (S)-2-acetolactate (S2AL) to yield (R)-2,3-dihydroxy-isovalerate. In the isomerase reaction, S2AL is rearranged via a Mg-dependent methyl migration to produce 3-hydroxy-3-methyl-2-ketobutyrate (HMKB). In the reductase reaction, this 2-ketoacid undergoes a metal-dependent reduction by NADPH to yield (R)-2,3-dihydroxy-isovalerate. This chain is Ketol-acid reductoisomerase (NADP(+)), found in Polynucleobacter asymbioticus (strain DSM 18221 / CIP 109841 / QLW-P1DMWA-1) (Polynucleobacter necessarius subsp. asymbioticus).